Consider the following 274-residue polypeptide: Large ribosomal subunit protein uL2 (274 aa).

The disordered stretch occupies residues 221–274 (RGTAMNPVDHPHGGGEGRNFGKHPVTPWGVQTKGKKTRNNKRTDKSIVRRRSKK).

It belongs to the universal ribosomal protein uL2 family. In terms of assembly, part of the 50S ribosomal subunit. Forms a bridge to the 30S subunit in the 70S ribosome.

One of the primary rRNA binding proteins. Required for association of the 30S and 50S subunits to form the 70S ribosome, for tRNA binding and peptide bond formation. It has been suggested to have peptidyltransferase activity; this is somewhat controversial. Makes several contacts with the 16S rRNA in the 70S ribosome. This chain is Large ribosomal subunit protein uL2, found in Hamiltonella defensa subsp. Acyrthosiphon pisum (strain 5AT).